A 340-amino-acid chain; its full sequence is Putative esterase YheT (340 aa).

The region spanning 73–312 is the AB hydrolase-1 domain; sequence PRLVVFHGLE…TEHGGHVGFI (240 aa). Active-site charge relay system residues include serine 153, aspartate 280, and histidine 308.

Belongs to the AB hydrolase superfamily. AB hydrolase 4 family.

The polypeptide is Putative esterase YheT (yheT) (Escherichia coli (strain K12)).